We begin with the raw amino-acid sequence, 507 residues long: Beta-glucosidase 13 (507 aa).

The N-terminal stretch at 1 to 22 (MRTKYFSLLVFIIVLASNEVIA) is a signal peptide. Gln50 lines the a beta-D-glucoside pocket. A glycan (N-linked (GlcNAc...) asparagine) is linked at Asn81. Residues His154 and 199 to 200 (NE) each bind a beta-D-glucoside. Glu200 (proton donor) is an active-site residue. Cysteines 219 and 227 form a disulfide. The N-linked (GlcNAc...) asparagine glycan is linked to Asn226. Residue Tyr344 participates in a beta-D-glucoside binding. N-linked (GlcNAc...) asparagine glycosylation is present at Asn358. A beta-D-glucoside-binding positions include Glu414, Trp459, 466-467 (EW), and Phe475. The active-site Nucleophile is the Glu414.

The protein belongs to the glycosyl hydrolase 1 family.

The enzyme catalyses Hydrolysis of terminal, non-reducing beta-D-glucosyl residues with release of beta-D-glucose.. The protein is Beta-glucosidase 13 of Arabidopsis thaliana (Mouse-ear cress).